Consider the following 649-residue polypeptide: Beta-galactosidase-1-like protein 3 (649 aa).

E203 functions as the Proton donor in the catalytic mechanism. Residue E277 is the Nucleophile of the active site.

The protein belongs to the glycosyl hydrolase 35 family.

This is Beta-galactosidase-1-like protein 3 (Glb1l3) from Mus musculus (Mouse).